The primary structure comprises 721 residues: Polyribonucleotide nucleotidyltransferase (721 aa).

Residues aspartate 486 and aspartate 492 each coordinate Mg(2+). Residues 553-612 (PKIVQLQIDIDKISLVIGSTGKTVKAITDEFEVKVQIEQNGKIILFGDDDFKMQKAKERI) form the KH domain. The S1 motif domain occupies 622 to 716 (GEIYEGIVKK…KFGKIDLEVV (95 aa)).

Belongs to the polyribonucleotide nucleotidyltransferase family. It depends on Mg(2+) as a cofactor.

The protein localises to the cytoplasm. The enzyme catalyses RNA(n+1) + phosphate = RNA(n) + a ribonucleoside 5'-diphosphate. Its function is as follows. Involved in mRNA degradation. Catalyzes the phosphorolysis of single-stranded polyribonucleotides processively in the 3'- to 5'-direction. In Borrelia garinii subsp. bavariensis (strain ATCC BAA-2496 / DSM 23469 / PBi) (Borreliella bavariensis), this protein is Polyribonucleotide nucleotidyltransferase.